We begin with the raw amino-acid sequence, 122 residues long: Fluoride-specific ion channel FluC (122 aa).

Transmembrane regions (helical) follow at residues 4-24, 36-56, 65-85, and 100-120; these read ILLI…VSGI, LIVN…SLFG, FIIT…YESF, and ILLN…ASMF. Positions 72 and 75 each coordinate Na(+).

Belongs to the fluoride channel Fluc/FEX (TC 1.A.43) family.

It localises to the cell membrane. The catalysed reaction is fluoride(in) = fluoride(out). Na(+) is not transported, but it plays an essential structural role and its presence is essential for fluoride channel function. Functionally, fluoride-specific ion channel. Important for reducing fluoride concentration in the cell, thus reducing its toxicity. This is Fluoride-specific ion channel FluC from Methanococcus maripaludis (strain DSM 14266 / JCM 13030 / NBRC 101832 / S2 / LL).